Consider the following 349-residue polypeptide: tRNA pseudouridine synthase D (349 aa).

Residue Phe-27 coordinates substrate. Asp-80 serves as the catalytic Nucleophile. Asn-129 contacts substrate. In terms of domain architecture, TRUD spans 155–303 (GVPNYFGAQR…VEASRRAMLL (149 aa)). A substrate-binding site is contributed by Phe-329.

This sequence belongs to the pseudouridine synthase TruD family.

The enzyme catalyses uridine(13) in tRNA = pseudouridine(13) in tRNA. Responsible for synthesis of pseudouridine from uracil-13 in transfer RNAs. This chain is tRNA pseudouridine synthase D, found in Salmonella choleraesuis (strain SC-B67).